The chain runs to 858 residues: Neurofilament medium polypeptide (858 aa).

An N-acetylserine modification is found at serine 2. The head stretch occupies residues 2-99 (SYTMEPLGNP…KLSRSNEKEQ (98 aa)). Residues 22–57 (ATYSRASASPSSGFRSQSWSRGSGSTVSSSYKRTNL) form a disordered region. Over residues 30-54 (SPSSGFRSQSWSRGSGSTVSSSYKR) the composition is skewed to low complexity. An O-linked (GlcNAc) threonine glycan is attached at threonine 47. Positions 96-407 (EKEQLQGLND…KLLEGEETRF (312 aa)) constitute an IF rod domain. The interval 100–131 (LQGLNDRFAGYIEKVHYLEQQNKEIEAELAAL) is coil 1A. Residues 132-144 (RQKHAGRAQLGDA) form a linker 1 region. A coil 1B region spans residues 145–243 (YEQELRELRG…EEEVAELLAQ (99 aa)). The tract at residues 244–260 (LQASHATVERKDYLKTD) is linker 12. The coil 2A stretch occupies residues 261-282 (LTTALKEIRAQLECQSDHNMHQ). The linker 2 stretch occupies residues 283–286 (AEEW). Residues 287–407 (FKCRYAKLTE…KLLEGEETRF (121 aa)) form a coil 2B region. The segment at 408-858 (SAFSGSITGP…SHAVVKEIKE (451 aa)) is tail. An O-linked (GlcNAc) threonine glycan is attached at threonine 427. Residues 478–788 (AAKAQEEEQE…VVTNGLDVSP (311 aa)) form a disordered region. 2 stretches are compositionally biased toward acidic residues: residues 484-500 (EEQE…EEEA) and 509-524 (AAEE…EEEE). Basic and acidic residues predominate over residues 525-541 (AAKSDAAEEGGSKKEEI). Positions 542 to 555 (EEKEEGEEAEEEEA) are enriched in acidic residues. Residues 556–572 (EAKGKAEEAGAKVEKVK) are compositionally biased toward basic and acidic residues. Pro residues predominate over residues 576–586 (AKSPPKSPPKS). Low complexity predominate over residues 590 to 601 (EQAKAVQKAAAE). Positions 602–623 (VGKDQKAEKAAEKAAKEEKAAS) are enriched in basic and acidic residues. Low complexity predominate over residues 624-637 (PEKPATPKVTSPEK). Basic and acidic residues-rich tracts occupy residues 651 to 664 (ITPE…KPTT) and 675 to 727 (ASPE…KAVV). Residues 728-743 (EESITVTKVTKVTAEV) are compositionally biased toward low complexity. Over residues 744–771 (EVSKEARKEDIAVNGEVEEKKDEAKEKE) the composition is skewed to basic and acidic residues.

The protein belongs to the intermediate filament family. There are a number of repeats of the tripeptide K-S-P, NFM is phosphorylated on a number of the serines in this motif. It is thought that phosphorylation of NFM results in the formation of interfilament cross bridges that are important in the maintenance of axonal caliber. In terms of processing, phosphorylation seems to play a major role in the functioning of the larger neurofilament polypeptides (NF-M and NF-H), the levels of phosphorylation being altered developmentally and coincident with a change in the neurofilament function.

The protein localises to the cytoplasm. It is found in the cytoskeleton. It localises to the cell projection. The protein resides in the axon. In terms of biological role, neurofilaments usually contain three intermediate filament proteins: NEFL, NEFM, and NEFH which are involved in the maintenance of neuronal caliber. May additionally cooperate with other neuronal intermediate filament proteins to form neuronal filamentous networks. The sequence is that of Neurofilament medium polypeptide (NEFM) from Gallus gallus (Chicken).